The sequence spans 202 residues: NADH-quinone oxidoreductase subunit C (202 aa).

It belongs to the complex I 30 kDa subunit family. As to quaternary structure, NDH-1 is composed of 14 different subunits. Subunits NuoB, C, D, E, F, and G constitute the peripheral sector of the complex.

It localises to the cell inner membrane. It carries out the reaction a quinone + NADH + 5 H(+)(in) = a quinol + NAD(+) + 4 H(+)(out). Its function is as follows. NDH-1 shuttles electrons from NADH, via FMN and iron-sulfur (Fe-S) centers, to quinones in the respiratory chain. The immediate electron acceptor for the enzyme in this species is believed to be ubiquinone. Couples the redox reaction to proton translocation (for every two electrons transferred, four hydrogen ions are translocated across the cytoplasmic membrane), and thus conserves the redox energy in a proton gradient. This is NADH-quinone oxidoreductase subunit C from Acidithiobacillus ferrooxidans (strain ATCC 23270 / DSM 14882 / CIP 104768 / NCIMB 8455) (Ferrobacillus ferrooxidans (strain ATCC 23270)).